Here is a 131-residue protein sequence, read N- to C-terminus: Profilin-3 (131 aa).

The protein belongs to the profilin family. Occurs in many kinds of cells as a complex with monomeric actin in a 1:1 ratio.

The protein localises to the cytoplasm. It localises to the cytoskeleton. Binds to actin and affects the structure of the cytoskeleton. At high concentrations, profilin prevents the polymerization of actin, whereas it enhances it at low concentrations. By binding to PIP2, it inhibits the formation of IP3 and DG. This Triticum aestivum (Wheat) protein is Profilin-3 (PRO3).